A 4835-amino-acid polypeptide reads, in one-letter code: Midasin (4835 aa).

AAA-ATPase protomer stretches follow at residues 12-161 (EVLR…PLVL), 324-689 (RSLD…HRFR), 797-1049 (MTTI…AEII), 1096-1375 (KFQD…DYIT), 1489-1738 (APTT…FGYR), and 1821-2110 (ALEA…SIDI). Residues 31 to 38 (GPSASGRT), 356 to 363 (GPTGIGKT), 814 to 821 (GTTSSGKT), 1127 to 1134 (GVSGAGKT), 1513 to 1520 (GDPGVGKS), and 1839 to 1846 (GSPESGKS) each bind ATP. Positions 2197–4058 (SVFIASTLNA…DGTGDQNVSK (1862 aa)) are linker. Disordered regions lie at residues 4033–4056 (DQKETDNDNQSGLGLGDGTGDQNV) and 4108–4523 (IEEE…LLNP). Acidic residues-rich tracts occupy residues 4109 to 4133 (EEEDSNGSDEEEVLEKEMGDEQGEA), 4141 to 4150 (EDDDSAEEYS), 4226 to 4241 (ADGEDETVNEELEEEQ), 4282 to 4291 (VDIDDNEASD), and 4315 to 4330 (NDEEEMQKDTEYDQEN). Residues 4331–4346 (ITDSNPDANEVGTNDQ) are compositionally biased toward polar residues. 3 stretches are compositionally biased toward basic and acidic residues: residues 4347 to 4360 (KQTHEDNDQFRQEN), 4394 to 4415 (EFQRIWKERLNIHDRESEKDEA), and 4429 to 4438 (VEFDDSKSGR). Residues 4468–4477 (HNSSCETSQS) show a composition bias toward polar residues. Residues 4478-4488 (SHDRPPAEHLN) are compositionally biased toward basic and acidic residues. Residues 4629 to 4818 (QVLLAVDDSS…RHIEDLPETL (190 aa)) enclose the VWFA domain.

This sequence belongs to the midasin family. As to quaternary structure, associates with pre-60S ribosomes in the nucleoplasm.

It is found in the nucleus. The protein localises to the nucleolus. The protein resides in the nucleoplasm. Nuclear chaperone required for maturation and nuclear export of pre-60S ribosome subunits. Functions at successive maturation steps to remove ribosomal factors at critical transition points, first driving the exit of early pre-60S particles from the nucleolus and then driving late pre-60S particles from the nucleus. This chain is Midasin (MDN1), found in Giardia intestinalis (Giardia lamblia).